The chain runs to 932 residues: DNA mismatch repair protein MutS (932 aa).

615–622 (GPNMAGKS) serves as a coordination point for ATP.

The protein belongs to the DNA mismatch repair MutS family.

This protein is involved in the repair of mismatches in DNA. It is possible that it carries out the mismatch recognition step. This protein has a weak ATPase activity. The chain is DNA mismatch repair protein MutS from Clostridium botulinum (strain Loch Maree / Type A3).